The primary structure comprises 305 residues: Acyl transferase (305 aa).

Active-site charge relay system residues include Ser-114, Asp-211, and His-241.

It belongs to the LuxD family.

Its pathway is lipid metabolism; fatty acid reduction for biolumincescence. Functionally, acyl transferase is part of the fatty acid reductase system required for aldehyde biosynthesis; it produces fatty acids for the luminescent reaction. This Vibrio campbellii (strain ATCC BAA-1116) protein is Acyl transferase.